Here is a 367-residue protein sequence, read N- to C-terminus: Chorismate synthase (367 aa).

NADP(+) is bound at residue R48. FMN is bound by residues 125 to 127 (RSS), 243 to 244 (NA), G283, 298 to 302 (KPTSS), and R324.

Belongs to the chorismate synthase family. As to quaternary structure, homotetramer. It depends on FMNH2 as a cofactor.

The enzyme catalyses 5-O-(1-carboxyvinyl)-3-phosphoshikimate = chorismate + phosphate. The protein operates within metabolic intermediate biosynthesis; chorismate biosynthesis; chorismate from D-erythrose 4-phosphate and phosphoenolpyruvate: step 7/7. Its function is as follows. Catalyzes the anti-1,4-elimination of the C-3 phosphate and the C-6 proR hydrogen from 5-enolpyruvylshikimate-3-phosphate (EPSP) to yield chorismate, which is the branch point compound that serves as the starting substrate for the three terminal pathways of aromatic amino acid biosynthesis. This reaction introduces a second double bond into the aromatic ring system. This is Chorismate synthase from Psychrobacter cryohalolentis (strain ATCC BAA-1226 / DSM 17306 / VKM B-2378 / K5).